Reading from the N-terminus, the 747-residue chain is Plakophilin-1 (747 aa).

Positions 1–234 are required for binding to single stranded DNA; it reads MNHSPLKTAL…SFGHSRASSK (234 aa). Positions 1–286 are required for interaction with EIF4A1; it reads MNHSPLKTAL…ESAKQQVYQL (286 aa). Ser4 carries the phosphoserine modification. The interval 48-68 is disordered; the sequence is TVKRQKSKSSQSSTLSHSNRG. 2 phosphorylation in this region is required for cytoplasmic localization and protein stabilization regions span residues 54–69 and 116–191; these read SKSS…NRGS and RFSS…STCS. Phosphoserine; by PKB/AKT2 is present on Ser118. Phosphoserine occurs at positions 119, 121, and 142. Residues 160-269 form a required for WNT-mediated nuclear localization region; the sequence is YCDPRGTLRK…KYQAIGAYYI (110 aa). ARM repeat units follow at residues 243–274, 275–316, 317–359, 360–415, 416–463, 525–556, 557–603, 604–649, and 650–713; these read SGLT…HTCF, QDES…NLVF, RSTT…NLSS, TDEL…KRLG, MREL…NCVA, NYDC…LNLM, GKSK…IARL, LQSG…SHTG, and NTSN…DMWS.

Belongs to the beta-catenin family. As to quaternary structure, part of a complex that contains DSG3, PKP1, YAP1 and YWHAG; the complex is required for localization of DSG3 and YAP1 to the cell membrane in keratinocytes. Interacts with DSP. Interacts (via N-terminus) with KRT5/CK5, KRT8/CK8 (via rod domain), KRT15/CK15 and KRT18/CK18 (via rod domain) as part of intermediate filaments. Interacts with VIM (via rod domain). Interacts with DSP. Interacts with DES. Interacts with FXR1; the interaction may facilitate the binding of PKP1 to PKP2, PKP3 and DSP mRNA. Interacts (via N-terminus) with EIF4A1; the interaction promotes EIF4A1 recruitment to the cap-dependent translation complex and EIF4A1 ATPase activity. Interacts with TJP1/ZO-1; the interaction facilitates TJP1/ZO-1 localization to the plasma membrane. Interacts (when phosphorylated) with YWHAG; the interaction results in translocation of PKP1 to the cytoplasm and loss of intercellular adhesion in keratinocytes. Post-translationally, phosphorylated by AKT2; required for interaction with YWHAG and subsequent localization away from desmosomes to the cytoplasm. Phosphorylation of Ser-118 by AKT2 promotes PKP1-driven cap-dependent mRNA translation and decreases intercellular adhesion, phosphorylation is promoted by insulin. Phosphorylation by RIPK4 at the N-terminus is required for its role in differentiation of keratinocytes and DSG1 localization at cell junctions. In terms of tissue distribution, expressed in stratified squamous, complex, glandular duct and bladder epithelia (at protein level). Widely expressed (at protein level).

The protein localises to the cell junction. It is found in the desmosome. Its subcellular location is the nucleus. The protein resides in the cytoplasm. It localises to the perinuclear region. The protein localises to the cell membrane. It is found in the stress granule. Functionally, a component of desmosome cell-cell junctions which are required for positive regulation of cellular adhesion. Plays a role in desmosome protein expression regulation and localization to the desmosomal plaque, thereby maintaining cell sheet integrity and anchorage of desmosomes to intermediate filaments. Required for localization of DSG3 and YAP1 to the cell membrane in keratinocytes in response to mechanical strain, via the formation of an interaction complex composed of DSG3, YAP1, PKP1 and YWHAG. Positively regulates differentiation of keratinocytes, potentially via promoting localization of DSG1 at desmosome cell junctions. Required for calcium-independent development and maturation of desmosome plaques specifically at lateral cell-cell contacts in differentiating keratinocytes. Plays a role in the maintenance of DSG3 protein abundance, DSG3 clustering and localization of these clusters to the cell membrane in keratinocytes. May also promote keratinocyte proliferation and morphogenesis during postnatal development. Required for tight junction inside-out transepidermal barrier function of the skin. Promotes Wnt-mediated proliferation and differentiation of ameloblasts, via facilitating TJP1/ZO-1 localization to tight junctions. Binds single-stranded DNA (ssDNA), and may thereby play a role in sensing DNA damage and promoting cell survival. Positively regulates cap-dependent translation and as a result cell proliferation, via recruitment of EIF4A1 to the initiation complex and promotion of EIF4A1 ATPase activity. Regulates the mRNA stability and protein abundance of desmosome components PKP2, PKP3, DSC2 and DSP, potentially via its interaction with FXR1. This Homo sapiens (Human) protein is Plakophilin-1 (PKP1).